The primary structure comprises 118 residues: Autophagy-related protein 8 (118 aa).

G116 carries Phosphatidylethanolamine amidated glycine lipidation. Residues 117–118 (SI) constitute a propeptide, removed in mature form.

The protein belongs to the ATG8 family. In terms of assembly, conjugation to phosphatidylethanolamine (PE) leads to homodimerization. Interacts with ATG1, ATG3, ATG4, ATG7 and ATG12. In terms of processing, the C-terminal Ser-117 and Ile-118 residues of ATG8 are removed by ATG4 to expose Gly-116 at the C-terminus. This Gly-116 forms then a thioester bond with ATG7 (E1-like activating enzyme) before being transferred to ATG3 (the specific E2 conjugating enzyme), in order to be finally amidated with phosphatidylethanolamine. This lipid modification anchors ATG8 to membranes and can be reversed by ATG4, releasing soluble ATG8.

It is found in the cytoplasmic vesicle. It localises to the cvt vesicle membrane. The protein localises to the autophagosome membrane. The protein resides in the vacuole membrane. Its function is as follows. Ubiquitin-like modifier involved in cytoplasm to vacuole transport (Cvt) vesicles and autophagosome formation. With ATG4, mediates the delivery of the vesicles and autophagosomes to the vacuole via the microtubule cytoskeleton. Required for selective autophagic degradation of the nucleus (nucleophagy) as well as for mitophagy which contributes to regulate mitochondrial quantity and quality by eliminating the mitochondria to a basal level to fulfill cellular energy requirements and preventing excess ROS production. Also participates in membrane fusion events that take place in the early secretory pathway. Also involved in endoplasmic reticulum-specific autophagic process and is essential for the survival of cells subjected to severe ER stress. The ATG8-PE conjugate mediates tethering between adjacent membranes and stimulates membrane hemifusion, leading to expansion of the autophagosomal membrane during autophagy. Moreover not only conjugation, but also subsequent ATG8-PE deconjugation is an important step required to facilitate multiple events during macroautophagy, and especially for efficient autophagosome biogenesis, the assembly of ATG9-containing tubulovesicular clusters into phagophores/autophagosomes, and for the disassembly of PAS-associated ATG components. Contributes to conidiation by regulating the conidial levels of the conidiation-related protein CP15 and mediates fungal oxidation resistance by controlling total superoxide dismutase (SOD) activity. The polypeptide is Autophagy-related protein 8 (Beauveria bassiana (strain ARSEF 2860) (White muscardine disease fungus)).